The following is a 138-amino-acid chain: MLQPKRRKYRKEQKGRNTGIATRGNAVSFGEFGLKAVGRGRLTARQIEAARRAMTRHIKRGGRIWIRIFPDKPISQKPAEVRMGNGKGNPEYYVAEIQPGKMLYEMDGVSEELAREAFRLAAAKLPLKTTFIVRQLGA.

The segment covering 1 to 13 (MLQPKRRKYRKEQ) has biased composition (basic residues). A disordered region spans residues 1–20 (MLQPKRRKYRKEQKGRNTGI).

Belongs to the universal ribosomal protein uL16 family. As to quaternary structure, part of the 50S ribosomal subunit.

In terms of biological role, binds 23S rRNA and is also seen to make contacts with the A and possibly P site tRNAs. This chain is Large ribosomal subunit protein uL16, found in Burkholderia mallei (strain NCTC 10247).